The following is a 110-amino-acid chain: Nucleoid-associated protein PERMA_0533 (110 aa).

Belongs to the YbaB/EbfC family. In terms of assembly, homodimer.

Its subcellular location is the cytoplasm. It localises to the nucleoid. Functionally, binds to DNA and alters its conformation. May be involved in regulation of gene expression, nucleoid organization and DNA protection. The sequence is that of Nucleoid-associated protein PERMA_0533 from Persephonella marina (strain DSM 14350 / EX-H1).